The following is a 101-amino-acid chain: MSKKCMINRELKRIRVARKYAARRIELKTQMRDESLSPEERQRVMLKFHSLPRDSSPVRQRRRCRSTGRPRGYIRKFGLSRNRLREVAMRGDVPGLVKASW.

Residues 52–72 (PRDSSPVRQRRRCRSTGRPRG) form a disordered region. Residues 59 to 72 (RQRRRCRSTGRPRG) are compositionally biased toward basic residues.

Belongs to the universal ribosomal protein uS14 family. In terms of assembly, part of the 30S ribosomal subunit. Contacts proteins S3 and S10.

Functionally, binds 16S rRNA, required for the assembly of 30S particles and may also be responsible for determining the conformation of the 16S rRNA at the A site. This chain is Small ribosomal subunit protein uS14, found in Nitrosococcus oceani (strain ATCC 19707 / BCRC 17464 / JCM 30415 / NCIMB 11848 / C-107).